The primary structure comprises 403 residues: Protein STRICTOSIDINE SYNTHASE-LIKE 13 (403 aa).

The N-terminal stretch at 1–42 is a signal peptide; that stretch reads MEKKGQHGTYESMMTHHPILCIIALSVLFIAIDPFHMSPIGG. Residues asparagine 66 and asparagine 206 are each glycosylated (N-linked (GlcNAc...) asparagine).

This sequence belongs to the strictosidine synthase family.

The protein resides in the vacuole. In terms of biological role, required for the exine formation during pollen development. The polypeptide is Protein STRICTOSIDINE SYNTHASE-LIKE 13 (Arabidopsis thaliana (Mouse-ear cress)).